A 384-amino-acid polypeptide reads, in one-letter code: MKAIVIGAGIGGLSAAVALKQSGIDCDVYEAVKEIKPVGAAISVWPNGVKCMAHLGMGDIMETFGGPLRRMAYRDFRSGENMTQFSLAPLIERTGSRPCPVSRAELQREMLDYWGRDSVQFGKRVTRCEEDADGVTVWFTDGSSASGDLLIAADGSHSALRPWVLGFTPQRRYAGYVNWNGLVEIDEALAPGDQWTTFVGEGKRVSLMPVSAGRFYFFFDVPLPAGLAEDRDTLRADLSRYFAGWAPPVQKLIAALDPQTTNRIEIHDIEPFSRLVRGRVALLGDAGHSTTPDIGQGGCAAMEDAVVLGAVFRQTRDIAAALCEYEAQRCDRVRDLVLKARKRCDITHGKDMQLTEAWYQELREETGERIINGMCDTILSGPLG.

Residues Gly11, 30 to 31 (EA), Ser43, and Val125 each bind FAD. Substrate is bound by residues Asn178, Arg204, and 216–218 (YFF). Residues Asp285 and 295 to 299 (GQGGC) contribute to the FAD site.

Belongs to the FAD-dependent urate hydroxylase family. The cofactor is FAD.

It carries out the reaction urate + NADH + O2 + H(+) = 5-hydroxyisourate + NAD(+) + H2O. The protein operates within purine metabolism; urate degradation. Catalyzes the hydroxylation of uric acid to 5-hydroxyisourate. This is FAD-dependent urate hydroxylase (hpxO) from Klebsiella pneumoniae.